The chain runs to 396 residues: E3 ubiquitin-protein transferase MAEA (396 aa).

Residues 1 to 124 (MAVQESAVQL…AAASVWKRKR (124 aa)) are extracellular and involved in cell to cell contact. Threonine 28 is subject to Phosphothreonine. The LisH domain occupies 121-153 (KRKRMDRMMVEHLLRCGYYNTAVKLARQSGIED). The 58-residue stretch at 159–216 (MFLTAKEVEESLERRETATCLAWCHDNKSRLRKMKSCLEFSLRIQEFIELIRQNKRLD) folds into the CTLH domain. Residues 314–381 (CPVCSRSLNK…QDDKVVCPRT (68 aa)) form an RING-Gid-type zinc finger.

In terms of assembly, identified in the CTLH complex that contains GID4, RANBP9 and/or RANBP10, MKLN1, MAEA, RMND5A (or alternatively its paralog RMND5B), GID8, ARMC8, WDR26 and YPEL5. Within this complex, MAEA, RMND5A (or alternatively its paralog RMND5B), GID8, WDR26, and RANBP9 and/or RANBP10 form the catalytic core, while GID4, MKLN1, ARMC8 and YPEL5 have ancillary roles. Interacts with F-actin. In terms of processing, autoubiquitinated as component of the CTLH E3 ubiquitin-protein ligase complex (in vitro).

It localises to the cytoplasm. The protein localises to the nucleus. Its subcellular location is the nucleoplasm. The protein resides in the nucleus matrix. It is found in the cell membrane. It localises to the cytoskeleton. It catalyses the reaction S-ubiquitinyl-[E2 ubiquitin-conjugating enzyme]-L-cysteine + [acceptor protein]-L-lysine = [E2 ubiquitin-conjugating enzyme]-L-cysteine + N(6)-ubiquitinyl-[acceptor protein]-L-lysine.. Functionally, core component of the CTLH E3 ubiquitin-protein ligase complex that selectively accepts ubiquitin from UBE2H and mediates ubiquitination and subsequent proteasomal degradation of the transcription factor HBP1. MAEA and RMND5A are both required for catalytic activity of the CTLH E3 ubiquitin-protein ligase complex. MAEA is required for normal cell proliferation. The CTLH E3 ubiquitin-protein ligase complex is not required for the degradation of enzymes involved in gluconeogenesis, such as FBP1. Plays a role in erythroblast enucleation during erythrocyte maturation and in the development of mature macrophages. Mediates the attachment of erythroid cell to mature macrophages; this MAEA-mediated contact inhibits erythroid cell apoptosis. Participates in erythroblastic island formation, which is the functional unit of definitive erythropoiesis. Associates with F-actin to regulate actin distribution in erythroblasts and macrophages. May contribute to nuclear architecture and cells division events. This chain is E3 ubiquitin-protein transferase MAEA (MAEA), found in Macaca fascicularis (Crab-eating macaque).